The following is a 1768-amino-acid chain: MGQELSQHELYVEQLKKALKTRGVKVKGNDLLKFFDFVKDTCPWFPQEGTIDIKRWRRVGDCFQDYYNTFGPEKIPVTAFSYWNLIKDLIDKKEADPQVMAAVTQTEKILKVSSQTDLRDNSHNKDMDLISLESDDEEAKAPSEKMTMSNKSPKKYPAMLASQNNNTDKDPDLSEVDWDGLEDEAAKYHNPDWPPFLSRPPPYNRTAATAPAVMAVVNPKEELKEKISQLEEQIKLEELHQSLIIRLQKLKTGNERVTSSGNIESHSRTPKWPGQCLPKGKYLINKNTEEYPPKDIFPVTETMDGQGQAWRHHNGFDFTVIKELKTAVSQYGATAPYTLAIVESIADNWLTPTDWNTLVRAVLSGGDHLIWKSEFFENCRDTAKRNQQAGNGWDFDMLTGSGNYANTDAQMQYDPGLFAQIQAAATNAWRKLPVKGDPGASLTGVKQGPDEPFADFVHRLITTAGRIFGNAEAGVDYVKQLAYENANPACQAAIRPYRKKTDLTGYIRLCSDIGPSYQQGLAMAAAFSGQTVKDLLNNKNKDRGGCFKCGKKGHFAKDCRDHSNKNPESKVPGLCPRCKRGKHWANECKSKTDSQGNPLPPHQGNRDEGPAPGPEASLWGSQLCSSQQQQSISKLNRASPGSAGLDLCSTTHTVLTPEMGPQTLATGVYGPLPPNTFGLILGRGSTTVKGLQIYPGVIDNDYTGEFKIMARAISSIITIPQGERIAQLVLLPLLRTAHKIQHPYRGDKNFGSSDIFWVQPITHQKPSLVLWLDGKAFTGLIDTGADVTIIKQEDWPSHWPTTETLTNLRGIGQSNNPRQSSKYLTWKDKENNSGLIKPFVIPNLPVNLWGRDLLSQMKIMMCSPNDIVTAQMLAQGYSPGKGLGKREDGILQPIPNSGQLDRKGFGNFLATAVDILAPQRYADPITWKSDEPVWVDQWPLTQEKLAAAQQLVQEQLQAGHIIESNSPWNTPIFVIKKKSGKWRLLQDLRAVNATMVLMGALQPGLPSPVAIPQGYFKIVIDLKDCFFTIPLQPVDQKRFAFSLPSTNFKQPMKRYQWKVLPQGMANSPTLCQKYVAAAIEPVRKSWAQMYIIHYMDDILIAGKLGEQVLQCFAQLKQALTTTGLQIAPEKVQLQDPYTYLGFQINGPKITNQKAVIRRDKLQTLNDFQKLLGDINWLRPYLHLTTGDLKPLFDILKGDSNPNSPRSLSEAALASLQKVETAIAEQFVTQIDYTQPLTFLIFNTTLTPTGLFWQNNPVMWVHLPASPKKVLLPYYDAIADLIILGRDNSKKYFGLEPSTIIQPYSKSQIHWLMQNTETWPIACASYAGNIDNHYPPNKLIQFCKLHAVVFPRIISKTPLDNALLVFTDGSSTGIAAYTFEKTTVRFKTSHTSAQLVELQALIAVLSAFPHRALNVYTDSAYLAHSIPLLETVSHIKHISDTAKFFLQCQQLIYNRSIPFYLGHIRAHSGLPGPLSQGNHITDLATKVVATTLTTNLTEAQTAHALHHLNAQSLRLMFKITREQARQIVKQCPTCVTYLPIPHFGVNPKGLVPNMLWQMDVTHYSEFGKLKYVHVSIDTFSGFLVATLQTGEATKHVIAHLLHCFSIIGQPIHIKTDNGPGYTSSNFRAFCSKLHIKHTFGIPYNPQGQGIVERAHLSLKNTLEKIKKGEWYPTQGSPRNILNHALFILNFLNLDAQNKSAADRFWHTSSKKEYAMVKWKDPLDNTWHGPDPVLIWGRGSVCVYSQTHDAARWLPERLVRQVSNVTQSRE.

The N-myristoyl glycine; by host moiety is linked to residue Gly2. A propeptide spanning residues Ala101–Met159 is cleaved from the precursor. The disordered stretch occupies residues Leu132–Ser152. Residues Pro200 to Tyr203 carry the PPXY motif motif. A coiled-coil region spans residues Ala215–Lys251. A CCHC-type zinc finger spans residues Gly544 to Asp561. A disordered region spans residues Lys589–Gln622. Positions Phe777–Leu853 constitute a Peptidase A2 domain. Asp782 acts as the Protease; shared with dimeric partner in catalysis. In terms of domain architecture, G-patch spans Pro864–Ala910. Residues Leu956 to Ile1144 enclose the Reverse transcriptase domain. Mg(2+) contacts are provided by Asp1021, Asp1096, Asp1097, Asp1367, Glu1396, Asp1417, and Asp1481. Positions Leu1358–Thr1489 constitute an RNase H type-1 domain. The Integrase-type zinc-finger motif lies at Thr1493–Val1534. Zn(2+)-binding residues include His1502, His1506, Cys1530, and Cys1533. One can recognise an Integrase catalytic domain in the interval Lys1547–Ser1708. Mg(2+) contacts are provided by Asp1558, Asp1615, and Glu1651. The integrase-type DNA-binding region spans Ala1713–Asn1762.

This sequence belongs to the retroviral Pol polyprotein family. Homodimer. In terms of assembly, interacts with the G-patch peptide. As to quaternary structure, interacts with the reverse transcriptase/ribonuclease H. Homotrimer. Mg(2+) is required as a cofactor. Released by autocatalytic processing. The protease can undergo further autoprocessing to yield 2 shorter but enzymatically active forms of 12 kDa and 13 kDa. In terms of processing, myristoylated. Myristoylation of the matrix (MA) domain mediates the transport and binding of Gag polyproteins to the host plasma membrane and is required for the assembly of viral particles. Post-translationally, specific enzymatic cleavages in vivo yield mature proteins.

The protein localises to the virion. The catalysed reaction is DNA(n) + a 2'-deoxyribonucleoside 5'-triphosphate = DNA(n+1) + diphosphate. It carries out the reaction Endonucleolytic cleavage to 5'-phosphomonoester.. It catalyses the reaction dUTP + H2O = dUMP + diphosphate + H(+). In terms of biological role, matrix protein. Nucleocapsid protein p14: Nucleocapsid protein. Its function is as follows. Capsid protein. Functionally, the aspartyl protease mediates proteolytic cleavages of Gag and Gag-Pol polyproteins during or shortly after the release of the virion from the plasma membrane. Cleavages take place as an ordered, step-wise cascade to yield mature proteins. This process is called maturation. Displays maximal activity during the budding process just prior to particle release from the cell. In terms of biological role, enhances the activity of the reverse transcriptase. May be part of the mature RT. RT is a multifunctional enzyme that converts the viral dimeric RNA genome into dsDNA in the cytoplasm, shortly after virus entry into the cell. This enzyme displays a DNA polymerase activity that can copy either DNA or RNA templates, and a ribonuclease H (RNase H) activity that cleaves the RNA strand of RNA-DNA heteroduplexes in a partially processive 3' to 5' endonucleasic mode. Conversion of viral genomic RNA into dsDNA requires many steps. A tRNA binds to the primer-binding site (PBS) situated at the 5' end of the viral RNA. RT uses the 3' end of the tRNA primer to perfom a short round of RNA-dependent minus-strand DNA synthesis. The reading proceeds through the U5 region and ends after the repeated (R) region which is present at both ends of viral RNA. The portion of the RNA-DNA heteroduplex is digested by the RNase H, resulting in a ssDNA product attached to the tRNA primer. This ssDNA/tRNA hybridizes with the identical R region situated at the 3' end of viral RNA. This template exchange, known as minus-strand DNA strong stop transfer, can be either intra- or intermolecular. RT uses the 3' end of this newly synthesized short ssDNA to perfom the RNA-dependent minus-strand DNA synthesis of the whole template. RNase H digests the RNA template except for a polypurine tract (PPT) situated at the 5' end of the genome. It is not clear if both polymerase and RNase H activities are simultaneous. RNase H probably can proceed both in a polymerase-dependent (RNA cut into small fragments by the same RT performing DNA synthesis) and a polymerase-independent mode (cleavage of remaining RNA fragments by free RTs). Secondly, RT performs DNA-directed plus-strand DNA synthesis using the PPT that has not been removed by RNase H as primers. PPT and tRNA primers are then removed by RNase H. The 3' and 5' ssDNA PBS regions hybridize to form a circular dsDNA intermediate. Strand displacement synthesis by RT to the PBS and PPT ends produces a blunt ended, linear dsDNA copy of the viral genome that includes long terminal repeats (LTRs) at both ends. Its function is as follows. Catalyzes viral DNA integration into the host chromosome, by performing a series of DNA cutting and joining reactions. In Macaca mulatta (Rhesus macaque), this protein is Gag-Pro-Pol polyprotein (pol).